The following is a 237-amino-acid chain: tRNA1(Val) (adenine(37)-N6)-methyltransferase (237 aa).

This sequence belongs to the methyltransferase superfamily. tRNA (adenine-N(6)-)-methyltransferase family.

It is found in the cytoplasm. It catalyses the reaction adenosine(37) in tRNA1(Val) + S-adenosyl-L-methionine = N(6)-methyladenosine(37) in tRNA1(Val) + S-adenosyl-L-homocysteine + H(+). Functionally, specifically methylates the adenine in position 37 of tRNA(1)(Val) (anticodon cmo5UAC). This chain is tRNA1(Val) (adenine(37)-N6)-methyltransferase, found in Bacteroides fragilis (strain ATCC 25285 / DSM 2151 / CCUG 4856 / JCM 11019 / LMG 10263 / NCTC 9343 / Onslow / VPI 2553 / EN-2).